Here is a 58-residue protein sequence, read N- to C-terminus: uncharacterized protein (58 aa).

This is an uncharacterized protein from Bacillus subtilis (strain 168).